The sequence spans 261 residues: MAHQAHSYHMVDPSPWPIFGAITALLTTSGLIMWFHYNSIALLTAGLLSMLLVMIQWWRDVVRESTFQGHHTPTVQKGLRYGMILFITSEAFFFLGFFWAFFHSSLAPTPELGGQWPPTGIKPLNPLEVPLLNTAILLASGVTVTWAHHSITEGNRKQAIHALTLTILLGFYFTALQAMEYHEASFSIADSVYGSTFFVATGFHGLHVIIGSSFLTICLLRLIKFHFTSNHHFGFEAAAWYWHFVDIIWLFLYMSMYWWGS.

At 1–15 (MAHQAHSYHMVDPSP) the chain is on the mitochondrial matrix side. The helical transmembrane segment at 16–34 (WPIFGAITALLTTSGLIMW) threads the bilayer. At 35–40 (FHYNSI) the chain is on the mitochondrial intermembrane side. The chain crosses the membrane as a helical span at residues 41-66 (ALLTAGLLSMLLVMIQWWRDVVREST). Residues 67-72 (FQGHHT) lie on the Mitochondrial matrix side of the membrane. The helical transmembrane segment at 73–105 (PTVQKGLRYGMILFITSEAFFFLGFFWAFFHSS) threads the bilayer. Residues 106-128 (LAPTPELGGQWPPTGIKPLNPLE) are Mitochondrial intermembrane-facing. Residues 129–152 (VPLLNTAILLASGVTVTWAHHSIT) traverse the membrane as a helical segment. The Mitochondrial matrix segment spans residues 153–155 (EGN). The helical transmembrane segment at 156–183 (RKQAIHALTLTILLGFYFTALQAMEYHE) threads the bilayer. The Mitochondrial intermembrane portion of the chain corresponds to 184–190 (ASFSIAD). Residues 191-223 (SVYGSTFFVATGFHGLHVIIGSSFLTICLLRLI) traverse the membrane as a helical segment. Residues 224–232 (KFHFTSNHH) are Mitochondrial matrix-facing. A helical transmembrane segment spans residues 233–256 (FGFEAAAWYWHFVDIIWLFLYMSM). The Mitochondrial intermembrane portion of the chain corresponds to 257–261 (YWWGS).

This sequence belongs to the cytochrome c oxidase subunit 3 family. Component of the cytochrome c oxidase (complex IV, CIV), a multisubunit enzyme composed of 14 subunits. The complex is composed of a catalytic core of 3 subunits MT-CO1, MT-CO2 and MT-CO3, encoded in the mitochondrial DNA, and 11 supernumerary subunits COX4I, COX5A, COX5B, COX6A, COX6B, COX6C, COX7A, COX7B, COX7C, COX8 and NDUFA4, which are encoded in the nuclear genome. The complex exists as a monomer or a dimer and forms supercomplexes (SCs) in the inner mitochondrial membrane with NADH-ubiquinone oxidoreductase (complex I, CI) and ubiquinol-cytochrome c oxidoreductase (cytochrome b-c1 complex, complex III, CIII), resulting in different assemblies (supercomplex SCI(1)III(2)IV(1) and megacomplex MCI(2)III(2)IV(2)).

The protein localises to the mitochondrion inner membrane. The enzyme catalyses 4 Fe(II)-[cytochrome c] + O2 + 8 H(+)(in) = 4 Fe(III)-[cytochrome c] + 2 H2O + 4 H(+)(out). Its function is as follows. Component of the cytochrome c oxidase, the last enzyme in the mitochondrial electron transport chain which drives oxidative phosphorylation. The respiratory chain contains 3 multisubunit complexes succinate dehydrogenase (complex II, CII), ubiquinol-cytochrome c oxidoreductase (cytochrome b-c1 complex, complex III, CIII) and cytochrome c oxidase (complex IV, CIV), that cooperate to transfer electrons derived from NADH and succinate to molecular oxygen, creating an electrochemical gradient over the inner membrane that drives transmembrane transport and the ATP synthase. Cytochrome c oxidase is the component of the respiratory chain that catalyzes the reduction of oxygen to water. Electrons originating from reduced cytochrome c in the intermembrane space (IMS) are transferred via the dinuclear copper A center (CU(A)) of subunit 2 and heme A of subunit 1 to the active site in subunit 1, a binuclear center (BNC) formed by heme A3 and copper B (CU(B)). The BNC reduces molecular oxygen to 2 water molecules using 4 electrons from cytochrome c in the IMS and 4 protons from the mitochondrial matrix. The polypeptide is Cytochrome c oxidase subunit 3 (MT-CO3) (Coturnix japonica (Japanese quail)).